A 357-amino-acid polypeptide reads, in one-letter code: Putative electron transport protein YccM (357 aa).

The Cytoplasmic portion of the chain corresponds to 1–36 (MAENKRTRWQRRPGTTGGKLPWNDWRNATTWRKATQ). A helical transmembrane segment spans residues 37–54 (LLLLAMNIYIAITFWYWV). The Periplasmic segment spans residues 55–91 (RYYETASSTTFVARPGGIEGWLPIAGLMNLKYSLVTG). A helical transmembrane segment spans residues 92–114 (QLPSVHAAAMLLLVAFIVISLLL). At 115–158 (KKAFCSWLCPVGTLSELIGDLGNKLFGRQCVLPRWLDIPLRGVK) the chain is on the cytoplasmic side. The chain crosses the membrane as a helical span at residues 159–181 (YLLLSFFIYIALLMPAQAIHYFM). At 182 to 195 (LSPYSVVMDVKMLD) the chain is on the periplasmic side. Residues 196–218 (FFRHMGTATLISVTVLLIASLFI) traverse the membrane as a helical segment. The Cytoplasmic portion of the chain corresponds to 219 to 309 (RHAWCRYLCP…KPAANKKAFA (91 aa)). 2 consecutive 4Fe-4S ferredoxin-type domains span residues 242–270 (FKIRRNAESCIDCGKCAKNCPSRIPVDKL) and 269–299 (KLIQVRTVECTGCMTCVESCPVASTLTFSLQ). Cysteine 251, cysteine 254, cysteine 257, cysteine 261, cysteine 278, cysteine 281, cysteine 284, and cysteine 288 together coordinate [4Fe-4S] cluster. Residues 310-332 (LSGWLMTLLVLGIMFAVIGYAMY) traverse the membrane as a helical segment. The Periplasmic segment spans residues 333–357 (AGVWQSPVPEELYRRLIPQAPMIGH).

The protein localises to the cell inner membrane. This is Putative electron transport protein YccM (yccM) from Escherichia coli (strain K12).